Consider the following 146-residue polypeptide: UPF0735 ACT domain-containing protein Teth514_2312 (146 aa).

An ACT domain is found at 71-146 (TLSMVLDHMP…GVRKIEILGE (76 aa)).

This sequence belongs to the UPF0735 family.

This is UPF0735 ACT domain-containing protein Teth514_2312 from Thermoanaerobacter sp. (strain X514).